The sequence spans 376 residues: tRNA(Met) cytidine acetate ligase (376 aa).

Residues 7 to 20 (IAEY…HYYQ), Gly-102, Asn-160, and Arg-181 contribute to the ATP site.

It belongs to the TmcAL family.

The protein resides in the cytoplasm. It catalyses the reaction cytidine(34) in elongator tRNA(Met) + acetate + ATP = N(4)-acetylcytidine(34) in elongator tRNA(Met) + AMP + diphosphate. Functionally, catalyzes the formation of N(4)-acetylcytidine (ac(4)C) at the wobble position of elongator tRNA(Met), using acetate and ATP as substrates. First activates an acetate ion to form acetyladenylate (Ac-AMP) and then transfers the acetyl group to tRNA to form ac(4)C34. This Exiguobacterium sp. (strain ATCC BAA-1283 / AT1b) protein is tRNA(Met) cytidine acetate ligase.